The chain runs to 192 residues: MSNTIKMVVGLGNPGKEYEQTRHNAGFWFLDELAWKWKASFKEEKKFFGEVARAALPDGDVWLLKPATFMNRSGQAIAALAQFYKIKPEEILVVHDELDIPCGRIKFKLGGGNGGHNGLKDIQAKLGTADYYRLRLGIDHPGDRNLVVGYVLNKPSTEHRRQIDDAVAKSLQAIPDILAGKWEEATRFLHSK.

A tRNA-binding site is contributed by tyrosine 18. The active-site Proton acceptor is histidine 23. Residues phenylalanine 69, asparagine 71, and asparagine 117 each coordinate tRNA.

This sequence belongs to the PTH family. Monomer.

Its subcellular location is the cytoplasm. The enzyme catalyses an N-acyl-L-alpha-aminoacyl-tRNA + H2O = an N-acyl-L-amino acid + a tRNA + H(+). Hydrolyzes ribosome-free peptidyl-tRNAs (with 1 or more amino acids incorporated), which drop off the ribosome during protein synthesis, or as a result of ribosome stalling. In terms of biological role, catalyzes the release of premature peptidyl moieties from peptidyl-tRNA molecules trapped in stalled 50S ribosomal subunits, and thus maintains levels of free tRNAs and 50S ribosomes. In Neisseria meningitidis serogroup C (strain 053442), this protein is Peptidyl-tRNA hydrolase.